The primary structure comprises 491 residues: Katanin p60 ATPase-containing subunit A1 (491 aa).

Positions 1 to 29 (MSLLMISENVKLAREYALLGNYDSAMVYY) are interaction with KATNB1. The interaction with dynein and NDEL1 stretch occupies residues 1-75 (MSLLMISENV…VKDIMKTLES (75 aa)). Residues 1–185 (MSLLMISENV…EPETNKFDST (185 aa)) form an interaction with microtubules region. Phosphoserine; by DYRK2 is present on residues S42 and S109. Residues 87-185 (QHDLPASEGE…EPETNKFDST (99 aa)) form a disordered region. A compositionally biased stretch (polar residues) spans 117–144 (SSQYSDPKSHGNRPSTTVRVHRSSAQNV). Position 133 is a phosphothreonine; by DYRK2 (T133). Residues 145-169 (HNDRGKAVRCREKKEQNKGREEKNK) show a composition bias toward basic and acidic residues. S170 carries the phosphoserine modification. 249 to 256 (GPPGTGKT) is a binding site for ATP.

It belongs to the AAA ATPase family. Katanin p60 subunit A1 subfamily. In terms of assembly, can homooligomerize into hexameric rings, which may be promoted by interaction with microtubules. Interacts with KATNB1, which may serve as a targeting subunit. Interacts with ASPM; the katanin complex formation KATNA1:KATNB1 is required for the association of ASPM. Interacts with dynein and NDEL1. Associates with the E3 ligase complex containing DYRK2, EDD/UBR5, DDB1 and DCAF1 proteins (EDVP complex). Interacts with KLHL42 (via the kelch domains). Interacts with CUL3; the interaction is enhanced by KLHL42. Interacts with KATNB1 and KATNBL1. Interacts with CAMSAP2 and CAMSAP3; leading to regulate the length of CAMSAP-decorated microtubule stretches. In terms of processing, phosphorylation by DYRK2 triggers ubiquitination and subsequent degradation. Post-translationally, ubiquitinated by the BCR(KLHL42) E3 ubiquitin ligase complex, leading to its proteasomal degradation. Ubiquitinated by the EDVP E3 ligase complex and subsequently targeted for proteasomal degradation.

The protein resides in the cytoplasm. The protein localises to the midbody. It localises to the cytoskeleton. It is found in the microtubule organizing center. Its subcellular location is the centrosome. The protein resides in the spindle pole. The protein localises to the spindle. It carries out the reaction n ATP + n H2O + a microtubule = n ADP + n phosphate + (n+1) alpha/beta tubulin heterodimers.. ATPase activity is stimulated by microtubules, which promote homooligomerization. ATP-dependent microtubule severing is stimulated by interaction with KATNB1. Catalytic subunit of a complex which severs microtubules in an ATP-dependent manner. Microtubule severing may promote rapid reorganization of cellular microtubule arrays and the release of microtubules from the centrosome following nucleation. Microtubule release from the mitotic spindle poles may allow depolymerization of the microtubule end proximal to the spindle pole, leading to poleward microtubule flux and poleward motion of chromosome. Microtubule release within the cell body of neurons may be required for their transport into neuronal processes by microtubule-dependent motor proteins. This transport is required for axonal growth. The polypeptide is Katanin p60 ATPase-containing subunit A1 (Homo sapiens (Human)).